A 192-amino-acid polypeptide reads, in one-letter code: Phosphoheptose isomerase (192 aa).

Residues 37-192 (LADSFKAGGK…IQLIEKEMVK (156 aa)) enclose the SIS domain. 52–54 (NGG) contacts substrate. Residues His61 and Glu65 each contribute to the Zn(2+) site. Substrate-binding positions include Glu65, 93 to 94 (ND), 119 to 121 (STS), Ser124, and Gln172. Zn(2+) contacts are provided by Gln172 and His180.

Belongs to the SIS family. GmhA subfamily. Homotetramer. Zn(2+) serves as cofactor.

The protein resides in the cytoplasm. It catalyses the reaction 2 D-sedoheptulose 7-phosphate = D-glycero-alpha-D-manno-heptose 7-phosphate + D-glycero-beta-D-manno-heptose 7-phosphate. Its pathway is carbohydrate biosynthesis; D-glycero-D-manno-heptose 7-phosphate biosynthesis; D-glycero-alpha-D-manno-heptose 7-phosphate and D-glycero-beta-D-manno-heptose 7-phosphate from sedoheptulose 7-phosphate: step 1/1. Catalyzes the isomerization of sedoheptulose 7-phosphate in D-glycero-D-manno-heptose 7-phosphate. The chain is Phosphoheptose isomerase from Escherichia coli O139:H28 (strain E24377A / ETEC).